A 310-amino-acid chain; its full sequence is Putative olfactory receptor 7A2 (310 aa).

Residues Met-1–Pro-26 are Extracellular-facing. The N-linked (GlcNAc...) asparagine glycan is linked to Asn-6. Residues Phe-27 to Ile-47 form a helical membrane-spanning segment. At Leu-48–Cys-55 the chain is on the cytoplasmic side. The chain crosses the membrane as a helical span at residues Leu-56–Ser-76. Residues Thr-77–Thr-100 lie on the Extracellular side of the membrane. Cysteines 98 and 190 form a disulfide. The chain crosses the membrane as a helical span at residues Gln-101–Tyr-121. Over Asp-122–Gln-140 the chain is Cytoplasmic. Residues Leu-141 to Ser-161 traverse the membrane as a helical segment. Topologically, residues Leu-162–Met-198 are extracellular. Residues Val-199 to Ser-218 form a helical membrane-spanning segment. Over Tyr-219–Ala-238 the chain is Cytoplasmic. A helical membrane pass occupies residues Leu-239 to Val-259. Residues Tyr-260–Thr-272 are Extracellular-facing. Residues Ala-273 to Leu-293 traverse the membrane as a helical segment. Residues Arg-294–Gln-310 lie on the Cytoplasmic side of the membrane.

Belongs to the G-protein coupled receptor 1 family.

Its subcellular location is the cell membrane. Functionally, odorant receptor. In Homo sapiens (Human), this protein is Putative olfactory receptor 7A2 (OR7A2P).